We begin with the raw amino-acid sequence, 354 residues long: Methionine import ATP-binding protein MetN (354 aa).

An ABC transporter domain is found at 8 to 250 (LDHIDITFRQ…PKEALTQEFI (243 aa)). ATP is bound at residue 42 to 49 (GYSGAGKS).

Belongs to the ABC transporter superfamily. Methionine importer (TC 3.A.1.24) family. The complex is composed of two ATP-binding proteins (MetN), two transmembrane proteins (MetI) and a solute-binding protein (MetQ).

It is found in the cell membrane. It catalyses the reaction L-methionine(out) + ATP + H2O = L-methionine(in) + ADP + phosphate + H(+). It carries out the reaction D-methionine(out) + ATP + H2O = D-methionine(in) + ADP + phosphate + H(+). Its function is as follows. Part of the ABC transporter complex MetNIQ involved in methionine import. Responsible for energy coupling to the transport system. The sequence is that of Methionine import ATP-binding protein MetN from Streptococcus pyogenes serotype M12 (strain MGAS2096).